A 488-amino-acid polypeptide reads, in one-letter code: Multidrug resistance outer membrane protein MdtP (488 aa).

The signal sequence occupies residues 1–23 (MINRQLSRLLLCSILGSTTLISG). Cysteine 24 carries N-palmitoyl cysteine lipidation. Cysteine 24 carries S-diacylglycerol cysteine lipidation.

It belongs to the outer membrane factor (OMF) (TC 1.B.17) family. In terms of assembly, could be part of a tripartite efflux system composed of MdtN, MdtO and MdtP.

It is found in the cell outer membrane. Could be involved in resistance to puromycin, acriflavine and tetraphenylarsonium chloride. The chain is Multidrug resistance outer membrane protein MdtP (mdtP) from Escherichia coli O6:H1 (strain CFT073 / ATCC 700928 / UPEC).